Reading from the N-terminus, the 229-residue chain is Somatolactin (229 aa).

The first 21 residues, 1–21, serve as a signal peptide directing secretion; it reads MAALQEVLLAVLLWPVLVTIS. 3 disulfide bridges follow: C26-C36, C87-C203, and C220-C228. An N-linked (GlcNAc...) asparagine glycan is attached at N143.

This sequence belongs to the somatotropin/prolactin family. In terms of tissue distribution, pituitary gland.

It is found in the secreted. This chain is Somatolactin, found in Tetraodon miurus (Congo puffer).